An 87-amino-acid polypeptide reads, in one-letter code: U3-theraphotoxin-Hhn1a 15 (87 aa).

The N-terminal stretch at 1–24 (MVNMKASMFLTFAGLVLLLVVCYA) is a signal peptide. Residues 25-52 (SESEEKEFPKEMLSSIFAVDNDFKQEER) constitute a propeptide that is removed on maturation. Intrachain disulfides connect Cys-54-Cys-67, Cys-61-Cys-72, and Cys-66-Cys-79.

This sequence belongs to the neurotoxin 10 (Hwtx-1) family. 51 (Hntx-8) subfamily. Hntx-8 sub-subfamily. In terms of tissue distribution, expressed by the venom gland.

It localises to the secreted. Functionally, ion channel inhibitor. The chain is U3-theraphotoxin-Hhn1a 15 from Cyriopagopus hainanus (Chinese bird spider).